A 176-amino-acid chain; its full sequence is Nucleoside triphosphate/diphosphate phosphatase (176 aa).

R23 (proton donor) is an active-site residue. The Mg(2+) site is built by N87, D103, D105, D107, D120, and E123.

This sequence belongs to the Ntdp family. Requires Mg(2+) as cofactor.

The enzyme catalyses a ribonucleoside 5'-triphosphate + H2O = a ribonucleoside 5'-diphosphate + phosphate + H(+). The catalysed reaction is a ribonucleoside 5'-diphosphate + H2O = a ribonucleoside 5'-phosphate + phosphate + H(+). In terms of biological role, has nucleoside phosphatase activity towards nucleoside triphosphates and nucleoside diphosphates. In Bacillus subtilis (strain 168), this protein is Nucleoside triphosphate/diphosphate phosphatase (ygaC).